A 218-amino-acid chain; its full sequence is Small ribosomal subunit protein uS3 (218 aa).

One can recognise a KH type-2 domain in the interval 2-71 (SAPQRRLPVY…IGRKGAIVKE (70 aa)).

The protein belongs to the universal ribosomal protein uS3 family. In terms of assembly, part of the 30S ribosomal subunit.

In terms of biological role, binds the lower part of the 30S subunit head. The polypeptide is Small ribosomal subunit protein uS3 (Pyrobaculum aerophilum (strain ATCC 51768 / DSM 7523 / JCM 9630 / CIP 104966 / NBRC 100827 / IM2)).